Here is a 520-residue protein sequence, read N- to C-terminus: Cholesterol side-chain cleavage enzyme, mitochondrial (520 aa).

A mitochondrion-targeting transit peptide spans 1-39 (MLARGLPLRSALVKACPPLLNTGREGWGHHRVGTGEGAG). Positions 27-48 (WGHHRVGTGEGAGISTRTPRPY) are disordered. Cys461 contributes to the heme binding site.

The protein belongs to the cytochrome P450 family. Interacts with FDX1/adrenodoxin. Requires heme as cofactor.

It is found in the mitochondrion inner membrane. It catalyses the reaction 6 reduced [adrenodoxin] + cholesterol + 3 O2 + 6 H(+) = 4-methylpentanal + pregnenolone + 6 oxidized [adrenodoxin] + 4 H2O. The enzyme catalyses 2 reduced [adrenodoxin] + cholesterol + O2 + 2 H(+) = (22R)-hydroxycholesterol + 2 oxidized [adrenodoxin] + H2O. It carries out the reaction (22R)-hydroxycholesterol + 2 reduced [adrenodoxin] + O2 + 2 H(+) = (20R,22R)-20,22-dihydroxycholesterol + 2 oxidized [adrenodoxin] + H2O. The catalysed reaction is (20R,22R)-20,22-dihydroxycholesterol + 2 reduced [adrenodoxin] + O2 + 2 H(+) = 4-methylpentanal + pregnenolone + 2 oxidized [adrenodoxin] + 2 H2O. It participates in lipid metabolism; C21-steroid hormone metabolism. The protein operates within steroid metabolism; cholesterol metabolism. Its function is as follows. A cytochrome P450 monooxygenase that catalyzes the side-chain hydroxylation and cleavage of cholesterol to pregnenolone, the precursor of most steroid hormones. Catalyzes three sequential oxidation reactions of cholesterol, namely the hydroxylation at C22 followed with the hydroxylation at C20 to yield 20R,22R-hydroxycholesterol that is further cleaved between C20 and C22 to yield the C21-steroid pregnenolone and 4-methylpentanal. Mechanistically, uses molecular oxygen inserting one oxygen atom into a substrate and reducing the second into a water molecule. Two electrons are provided by NADPH via a two-protein mitochondrial transfer system comprising flavoprotein FDXR (adrenodoxin/ferredoxin reductase) and nonheme iron-sulfur protein FDX1 or FDX2 (adrenodoxin/ferredoxin). In Capra hircus (Goat), this protein is Cholesterol side-chain cleavage enzyme, mitochondrial.